The primary structure comprises 110 residues: Multidrug transporter PA4990 (110 aa).

4 consecutive transmembrane segments (helical) span residues 7–27 (LAIA…VAGF), 31–51 (LPLL…VLVM), 58–78 (VVYA…AMFV), and 85–105 (PAAL…QLFS).

Belongs to the drug/metabolite transporter (DMT) superfamily. Small multidrug resistance (SMR) (TC 2.A.7.1) family.

The protein resides in the cell membrane. Confers resistance to ethidium bromide, acriflavine and methyl viologen. This is Multidrug transporter PA4990 from Pseudomonas aeruginosa (strain ATCC 15692 / DSM 22644 / CIP 104116 / JCM 14847 / LMG 12228 / 1C / PRS 101 / PAO1).